Reading from the N-terminus, the 325-residue chain is Beta-ketoacyl-[acyl-carrier-protein] synthase III (325 aa).

Residues Cys-119 and His-252 contribute to the active site. Positions 253 to 257 are ACP-binding; the sequence is QANIR. Residue Asn-282 is part of the active site.

It belongs to the thiolase-like superfamily. FabH family. Homodimer.

Its subcellular location is the cytoplasm. The enzyme catalyses malonyl-[ACP] + acetyl-CoA + H(+) = 3-oxobutanoyl-[ACP] + CO2 + CoA. It functions in the pathway lipid metabolism; fatty acid biosynthesis. In terms of biological role, catalyzes the condensation reaction of fatty acid synthesis by the addition to an acyl acceptor of two carbons from malonyl-ACP. Catalyzes the first condensation reaction which initiates fatty acid synthesis and may therefore play a role in governing the total rate of fatty acid production. Possesses both acetoacetyl-ACP synthase and acetyl transacylase activities. Its substrate specificity determines the biosynthesis of branched-chain and/or straight-chain of fatty acids. The protein is Beta-ketoacyl-[acyl-carrier-protein] synthase III of Paracidovorax citrulli (strain AAC00-1) (Acidovorax citrulli).